The chain runs to 420 residues: 3-phosphoshikimate 1-carboxyvinyltransferase (420 aa).

3-phosphoshikimate contacts are provided by K20, S21, and R25. K20 contributes to the phosphoenolpyruvate binding site. Residue R119 coordinates phosphoenolpyruvate. Residues S161, S162, Q163, S189, D303, Q326, and K330 each coordinate 3-phosphoshikimate. Q163 is a binding site for phosphoenolpyruvate. The Proton acceptor role is filled by D303. Phosphoenolpyruvate is bound by residues R334, R375, and K400.

It belongs to the EPSP synthase family. Monomer.

The protein localises to the cytoplasm. The enzyme catalyses 3-phosphoshikimate + phosphoenolpyruvate = 5-O-(1-carboxyvinyl)-3-phosphoshikimate + phosphate. Its pathway is metabolic intermediate biosynthesis; chorismate biosynthesis; chorismate from D-erythrose 4-phosphate and phosphoenolpyruvate: step 6/7. Its function is as follows. Catalyzes the transfer of the enolpyruvyl moiety of phosphoenolpyruvate (PEP) to the 5-hydroxyl of shikimate-3-phosphate (S3P) to produce enolpyruvyl shikimate-3-phosphate and inorganic phosphate. The chain is 3-phosphoshikimate 1-carboxyvinyltransferase from Dehalococcoides mccartyi (strain ATCC BAA-2266 / KCTC 15142 / 195) (Dehalococcoides ethenogenes (strain 195)).